The primary structure comprises 59 residues: Large ribosomal subunit protein bL32 (59 aa).

Basic residues predominate over residues 1–16 (MAVPKRKTSPSRRGMR). Residues 1 to 20 (MAVPKRKTSPSRRGMRRSHD) are disordered.

It belongs to the bacterial ribosomal protein bL32 family.

The polypeptide is Large ribosomal subunit protein bL32 (Novosphingobium aromaticivorans (strain ATCC 700278 / DSM 12444 / CCUG 56034 / CIP 105152 / NBRC 16084 / F199)).